The chain runs to 299 residues: ATP phosphoribosyltransferase (299 aa).

It belongs to the ATP phosphoribosyltransferase family. Long subfamily. The cofactor is Mg(2+).

It is found in the cytoplasm. The catalysed reaction is 1-(5-phospho-beta-D-ribosyl)-ATP + diphosphate = 5-phospho-alpha-D-ribose 1-diphosphate + ATP. It participates in amino-acid biosynthesis; L-histidine biosynthesis; L-histidine from 5-phospho-alpha-D-ribose 1-diphosphate: step 1/9. Its activity is regulated as follows. Feedback inhibited by histidine. In terms of biological role, catalyzes the condensation of ATP and 5-phosphoribose 1-diphosphate to form N'-(5'-phosphoribosyl)-ATP (PR-ATP). Has a crucial role in the pathway because the rate of histidine biosynthesis seems to be controlled primarily by regulation of HisG enzymatic activity. This Shewanella sediminis (strain HAW-EB3) protein is ATP phosphoribosyltransferase.